Here is a 338-residue protein sequence, read N- to C-terminus: DNA-directed RNA polymerase subunit alpha (338 aa).

The tract at residues 1-233 is alpha N-terminal domain (alpha-NTD); that stretch reads MLREEVAVST…DLFIPFLHAE (233 aa). The interval 266–338 is alpha C-terminal domain (alpha-CTD); sequence IALKFIFIDQ…IDLPKNKFSN (73 aa).

The protein belongs to the RNA polymerase alpha chain family. In plastids the minimal PEP RNA polymerase catalytic core is composed of four subunits: alpha, beta, beta', and beta''. When a (nuclear-encoded) sigma factor is associated with the core the holoenzyme is formed, which can initiate transcription.

It localises to the plastid. It is found in the chloroplast. The enzyme catalyses RNA(n) + a ribonucleoside 5'-triphosphate = RNA(n+1) + diphosphate. Functionally, DNA-dependent RNA polymerase catalyzes the transcription of DNA into RNA using the four ribonucleoside triphosphates as substrates. The chain is DNA-directed RNA polymerase subunit alpha from Nandina domestica (Heavenly bamboo).